We begin with the raw amino-acid sequence, 100 residues long: NADH-quinone oxidoreductase subunit K (100 aa).

Transmembrane regions (helical) follow at residues 1 to 21 (MIGL…GLAG), 28 to 48 (ILLL…GFVA), and 64 to 84 (FIIA…ILWF).

It belongs to the complex I subunit 4L family. In terms of assembly, NDH-1 is composed of 14 different subunits. Subunits NuoA, H, J, K, L, M, N constitute the membrane sector of the complex.

It is found in the cell inner membrane. The enzyme catalyses a quinone + NADH + 5 H(+)(in) = a quinol + NAD(+) + 4 H(+)(out). In terms of biological role, NDH-1 shuttles electrons from NADH, via FMN and iron-sulfur (Fe-S) centers, to quinones in the respiratory chain. The immediate electron acceptor for the enzyme in this species is believed to be ubiquinone. Couples the redox reaction to proton translocation (for every two electrons transferred, four hydrogen ions are translocated across the cytoplasmic membrane), and thus conserves the redox energy in a proton gradient. This is NADH-quinone oxidoreductase subunit K from Helicobacter pylori (strain P12).